The primary structure comprises 514 residues: MGKDFRYYFQHPWSRMIVAYLVIFFNFLIFAEDPVSHSQTEANVIVVGNCFSFVTNKYPRGVGWRILKVLLWLLAILTGLIAGKFLFHQRLFGQLLRLKMFREDHGSWMTMFFSTILFLFIFSHIYNTILLMDGNMGAYIITDYMGIRNESFMKLAAVGTWMGDFVTAWMVTDMMLQDKPYPDWGKSARAFWKKGNVRITLFWTVLFTLTSVVVLVITTDWISWDKLNRGFLPSDEVSRAFLASFILVFDLLIVMQDWEFPHFMGDVDVNLPGLHTPHMQFKIPFFQKIFKEEYRIHITGKWFNYGIIFLVLILDLNMWKNQIFYKPHEYGQYIGPGQKIYTVKDSESLKDLNRTKLSWEWRSNHTNPRTNKTYVEGDMFLHSRFIGASLDVKCLAFVPSLIAFVWFGFFIWFFGRFLKNEPRMENQDKTYTRMKRKSPSEHSKDMGITRENTQASVEDPLNDPSLVCIRSDFNEIVYKSSHLTSENLSSQLNESTSATEADQDPTTSKSTPTN.

Topologically, residues 1–15 (MGKDFRYYFQHPWSR) are cytoplasmic. Residues 16-36 (MIVAYLVIFFNFLIFAEDPVS) traverse the membrane as a helical segment. Over 37–65 (HSQTEANVIVVGNCFSFVTNKYPRGVGWR) the chain is Extracellular. Residues 66–86 (ILKVLLWLLAILTGLIAGKFL) form a helical membrane-spanning segment. The Cytoplasmic segment spans residues 87–110 (FHQRLFGQLLRLKMFREDHGSWMT). Residues 111–131 (MFFSTILFLFIFSHIYNTILL) traverse the membrane as a helical segment. Residues 132-154 (MDGNMGAYIITDYMGIRNESFMK) lie on the Extracellular side of the membrane. A helical membrane pass occupies residues 155-175 (LAAVGTWMGDFVTAWMVTDMM). Residues 176-198 (LQDKPYPDWGKSARAFWKKGNVR) are Cytoplasmic-facing. The chain crosses the membrane as a helical span at residues 199-219 (ITLFWTVLFTLTSVVVLVITT). Topologically, residues 220 to 239 (DWISWDKLNRGFLPSDEVSR) are extracellular. The chain crosses the membrane as a helical span at residues 240-260 (AFLASFILVFDLLIVMQDWEF). The Cytoplasmic portion of the chain corresponds to 261 to 295 (PHFMGDVDVNLPGLHTPHMQFKIPFFQKIFKEEYR). The chain crosses the membrane as a helical span at residues 296–316 (IHITGKWFNYGIIFLVLILDL). Over 317–394 (NMWKNQIFYK…FIGASLDVKC (78 aa)) the chain is Extracellular. N-linked (GlcNAc...) asparagine glycans are attached at residues asparagine 353 and asparagine 371. The chain crosses the membrane as a helical span at residues 395 to 415 (LAFVPSLIAFVWFGFFIWFFG). Residues 416-514 (RFLKNEPRME…PTTSKSTPTN (99 aa)) lie on the Cytoplasmic side of the membrane. Disordered stretches follow at residues 429–459 (KTYT…SVED) and 486–514 (ENLS…TPTN). A compositionally biased stretch (basic and acidic residues) spans 438 to 448 (SPSEHSKDMGI). Threonine 453 carries the post-translational modification Phosphothreonine.

The protein belongs to the TMEM117 family.

The protein resides in the cell membrane. Its function is as follows. Involved in endoplasmic reticulum (ER) stress-induced cell death pathway. This chain is Transmembrane protein 117 (TMEM117), found in Homo sapiens (Human).